A 180-amino-acid chain; its full sequence is Cell division protein ZapC (180 aa).

It belongs to the ZapC family. Interacts directly with FtsZ.

Its subcellular location is the cytoplasm. In terms of biological role, contributes to the efficiency of the cell division process by stabilizing the polymeric form of the cell division protein FtsZ. Acts by promoting interactions between FtsZ protofilaments and suppressing the GTPase activity of FtsZ. This chain is Cell division protein ZapC, found in Vibrio cholerae serotype O1 (strain ATCC 39315 / El Tor Inaba N16961).